Consider the following 179-residue polypeptide: ATP-dependent protease subunit HslV (179 aa).

Thr9 is an active-site residue. Residues Ala164, Cys167, and Thr170 each contribute to the Na(+) site.

Belongs to the peptidase T1B family. HslV subfamily. In terms of assembly, a double ring-shaped homohexamer of HslV is capped on each side by a ring-shaped HslU homohexamer. The assembly of the HslU/HslV complex is dependent on binding of ATP.

It is found in the cytoplasm. The catalysed reaction is ATP-dependent cleavage of peptide bonds with broad specificity.. Allosterically activated by HslU binding. Functionally, protease subunit of a proteasome-like degradation complex believed to be a general protein degrading machinery. The sequence is that of ATP-dependent protease subunit HslV from Syntrophobacter fumaroxidans (strain DSM 10017 / MPOB).